The sequence spans 304 residues: Acetaldehyde dehydrogenase 2 (304 aa).

C131 functions as the Acyl-thioester intermediate in the catalytic mechanism. NAD(+)-binding positions include 162–170 (SAGPGTRKN) and N273.

Belongs to the acetaldehyde dehydrogenase family.

The catalysed reaction is acetaldehyde + NAD(+) + CoA = acetyl-CoA + NADH + H(+). The chain is Acetaldehyde dehydrogenase 2 from Dechloromonas aromatica (strain RCB).